The chain runs to 968 residues: Serine/threonine-protein kinase apg-1 (968 aa).

One can recognise a Protein kinase domain in the interval 24 to 329; it reads FVIDQEIGKG…FEDLFNHPVV (306 aa). ATP-binding positions include 30-38 and lysine 53; that span reads IGKGSFAKV. Aspartate 167 acts as the Proton acceptor in catalysis. 4 disordered regions span residues 334–500, 528–585, 884–906, and 939–968; these read PGLV…ERAA, MYPQ…LGTS, LPKRKVSGASKEEKTGANELSDE, and ASKAQQQEEQKQQNLMRRRSGEMTSRSVPA. Basic and acidic residues-rich tracts occupy residues 350–361, 371–380, and 417–431; these read LKEERPVSRAED, LRKDLADREG, and PREDRLSYSPRKEAA. Composition is skewed to polar residues over residues 441-452, 528-538, and 545-557; these read VQPSTSAPTRPS, MYPQQPQSPKS, and ATQQGSPTSTSGA.

Belongs to the protein kinase superfamily. Ser/Thr protein kinase family. APG1/unc-51/ULK1 subfamily. In terms of assembly, homodimer. Forms a ternary complex with ATG13 and ATG17.

Its subcellular location is the cytoplasm. The protein localises to the preautophagosomal structure membrane. It carries out the reaction L-seryl-[protein] + ATP = O-phospho-L-seryl-[protein] + ADP + H(+). The catalysed reaction is L-threonyl-[protein] + ATP = O-phospho-L-threonyl-[protein] + ADP + H(+). Serine/threonine protein kinase involved in the cytoplasm to vacuole transport (Cvt) and found to be essential in autophagy, where it is required for the formation of autophagosomes. Involved in the clearance of protein aggregates which cannot be efficiently cleared by the proteasome. Required for selective autophagic degradation of the nucleus (nucleophagy) as well as for mitophagy which contributes to regulate mitochondrial quantity and quality by eliminating the mitochondria to a basal level to fulfill cellular energy requirements and preventing excess ROS production. Also involved in endoplasmic reticulum-specific autophagic process, in selective removal of ER-associated degradation (ERAD) substrates. Plays a key role in ATG9 and ATG23 cycling through the pre-autophagosomal structure and is necessary to promote ATG18 binding to ATG9 through phosphorylation of ATG9. Catalyzes phosphorylation of ATG4, decreasing the interaction between ATG4 and ATG8 and impairing deconjugation of PE-conjugated forms of ATG8. This Neurospora crassa (strain ATCC 24698 / 74-OR23-1A / CBS 708.71 / DSM 1257 / FGSC 987) protein is Serine/threonine-protein kinase apg-1.